Reading from the N-terminus, the 195-residue chain is Imidazoleglycerol-phosphate dehydratase (195 aa).

This sequence belongs to the imidazoleglycerol-phosphate dehydratase family.

Its subcellular location is the cytoplasm. The catalysed reaction is D-erythro-1-(imidazol-4-yl)glycerol 3-phosphate = 3-(imidazol-4-yl)-2-oxopropyl phosphate + H2O. It participates in amino-acid biosynthesis; L-histidine biosynthesis; L-histidine from 5-phospho-alpha-D-ribose 1-diphosphate: step 6/9. The sequence is that of Imidazoleglycerol-phosphate dehydratase from Roseobacter denitrificans (strain ATCC 33942 / OCh 114) (Erythrobacter sp. (strain OCh 114)).